The chain runs to 942 residues: Homeobox transcription factor phx1 (942 aa).

Polar residues-rich tracts occupy residues 1–19 (MRSY…NINY), 61–73 (HLQG…TNPN), 99–116 (ADNN…TNPS), and 122–135 (IVKS…SKQN). Disordered stretches follow at residues 1 to 54 (MRSY…MQLP), 61 to 80 (HLQG…PEFD), 87 to 172 (KQEK…KKQR), 604 to 651 (WANQ…STST), and 892 to 922 (SSSG…DVYS). Residues 142 to 151 (SVEKAKENVA) show a composition bias toward basic and acidic residues. The segment covering 153-164 (ESGTPESGGSTS) has biased composition (low complexity). The homeobox DNA-binding region spans 164-224 (SAPKSKKQRL…QNRRAKSKLI (61 aa)). Composition is skewed to polar residues over residues 604–614 (WANQLPRQPDS) and 630–641 (SHDTSSEYGNKS).

It is found in the nucleus. Trnascription factor that regulates the expression of the homocitrate synthase (HCS) lys4. The sequence is that of Homeobox transcription factor phx1 (phx1) from Schizosaccharomyces pombe (strain 972 / ATCC 24843) (Fission yeast).